The chain runs to 149 residues: Large ribosomal subunit protein bL9 (149 aa).

Belongs to the bacterial ribosomal protein bL9 family.

Binds to the 23S rRNA. The polypeptide is Large ribosomal subunit protein bL9 (Legionella pneumophila (strain Paris)).